Here is a 406-residue protein sequence, read N- to C-terminus: LIM/homeobox protein Lhx2 (406 aa).

LIM zinc-binding domains lie at 53 to 105 and 115 to 168; these read CAGC…CKED and CARC…CRLH. Residues 250-270 are disordered; sequence DAEHLDRDQPYPSSQKTKRMR. The segment at residues 266-325 is a DNA-binding region (homeobox); that stretch reads TKRMRTSFKHHQLRTMKSYFAINHNPDAKDLKQLAQKTGLTKRVLQVWFQNARAKFRRNL. Residues 307–323 carry the Nuclear localization signal motif; it reads KRVLQVWFQNARAKFRR. A compositionally biased stretch (polar residues) spans 328 to 356; that stretch reads QENTGVDKTSDATLQTGTPSGPASELSNA. Disordered regions lie at residues 328-375 and 387-406; these read QENT…SPTL and GNLE…TNLF. Residues 357-375 are compositionally biased toward low complexity; sequence SLSPSSTPTTLTDLTSPTL. Polar residues predominate over residues 396 to 406; the sequence is SPSQTTLTNLF.

As to quaternary structure, interacts (via LIM domains) with CITED2. Interacts with POU4F2 isoform 1.

It localises to the nucleus. Acts as a transcriptional activator. Stimulates the promoter of the alpha-glycoprotein gene. Transcriptional regulatory protein involved in the control of cell differentiation in developing lymphoid and neural cell types. The protein is LIM/homeobox protein Lhx2 (Lhx2) of Mus musculus (Mouse).